Here is a 162-residue protein sequence, read N- to C-terminus: Catabolic 3-dehydroquinase (162 aa).

The Proton acceptor role is filled by Tyr24. Positions 88, 94, and 101 each coordinate substrate. His114 acts as the Proton donor in catalysis. Residues 115–116 (VS) and Arg125 contribute to the substrate site.

It belongs to the type-II 3-dehydroquinase family. As to quaternary structure, homododecamer. Adopts a ring-like structure, composed of an arrangement of two hexameric rings stacked on top of one another.

The catalysed reaction is 3-dehydroquinate = 3-dehydroshikimate + H2O. It functions in the pathway aromatic compound metabolism; 3,4-dihydroxybenzoate biosynthesis; 3,4-dihydroxybenzoate from 3-dehydroquinate: step 1/2. In terms of biological role, is involved in the catabolism of quinate. Allows the utilization of quinate as carbon source via the beta-ketoadipate pathway. The protein is Catabolic 3-dehydroquinase of Podospora anserina (strain S / ATCC MYA-4624 / DSM 980 / FGSC 10383) (Pleurage anserina).